Here is a 461-residue protein sequence, read N- to C-terminus: Growth/differentiation factor 7 (461 aa).

Residues 1-19 (MDLSAAAALCLWLLSACRP) form the signal peptide. Residues 20 to 315 (RDGLEAAAVL…ANLGGRRRRR (296 aa)) constitute a propeptide that is removed on maturation. A glycan (N-linked (GlcNAc...) asparagine) is linked at Asn79. A disordered region spans residues 287–360 (LRAAAEPPPD…GHGRRGRSRC (74 aa)). Gly residues predominate over residues 323–350 (GAQGSGGGGGGGGGGGGGGGGGGGGAGR). Residues 351 to 360 (GHGRRGRSRC) are compositionally biased toward basic residues. Cystine bridges form between Cys360–Cys426, Cys389–Cys458, and Cys393–Cys460.

It belongs to the TGF-beta family. Homodimer; disulfide-linked.

It is found in the secreted. This chain is Growth/differentiation factor 7 (Gdf7), found in Mus musculus (Mouse).